The primary structure comprises 273 residues: Dermonecrotic toxin LspiSicTox-betaIE1ii (273 aa).

His5 is an active-site residue. Mg(2+)-binding residues include Glu25 and Asp27. The active-site Nucleophile is the His41. Disulfide bonds link Cys45–Cys51 and Cys47–Cys189. Asp85 contacts Mg(2+).

Belongs to the arthropod phospholipase D family. Class II subfamily. Requires Mg(2+) as cofactor. Expressed by the venom gland.

It localises to the secreted. It carries out the reaction an N-(acyl)-sphingosylphosphocholine = an N-(acyl)-sphingosyl-1,3-cyclic phosphate + choline. The enzyme catalyses an N-(acyl)-sphingosylphosphoethanolamine = an N-(acyl)-sphingosyl-1,3-cyclic phosphate + ethanolamine. It catalyses the reaction a 1-acyl-sn-glycero-3-phosphocholine = a 1-acyl-sn-glycero-2,3-cyclic phosphate + choline. The catalysed reaction is a 1-acyl-sn-glycero-3-phosphoethanolamine = a 1-acyl-sn-glycero-2,3-cyclic phosphate + ethanolamine. Its function is as follows. Dermonecrotic toxins cleave the phosphodiester linkage between the phosphate and headgroup of certain phospholipids (sphingolipid and lysolipid substrates), forming an alcohol (often choline) and a cyclic phosphate. This toxin acts on sphingomyelin (SM). It may also act on ceramide phosphoethanolamine (CPE), lysophosphatidylcholine (LPC) and lysophosphatidylethanolamine (LPE), but not on lysophosphatidylserine (LPS), and lysophosphatidylglycerol (LPG). It acts by transphosphatidylation, releasing exclusively cyclic phosphate products as second products. Induces dermonecrosis, hemolysis, increased vascular permeability, edema, inflammatory response, and platelet aggregation. The chain is Dermonecrotic toxin LspiSicTox-betaIE1ii from Loxosceles spinulosa (Recluse spider).